A 396-amino-acid polypeptide reads, in one-letter code: Cathepsin E (396 aa).

The N-terminal stretch at 1-19 (MKTLLLLLLVLLELGEAQG) is a signal peptide. The propeptide at 20-53 (SLHRVPLRRHPSLKKKLRARSQLSEFWKSHNLDM) is activation peptide. The Peptidase A1 domain occupies 78-396 (YFGTISIGSP…NRVGLAPAVP (319 aa)). Asparagine 90 carries an N-linked (GlcNAc...) asparagine glycan. The active site involves aspartate 96. Intrachain disulfides connect cysteine 109–cysteine 114 and cysteine 272–cysteine 276. The active site involves aspartate 281. Cysteine 314 and cysteine 351 are disulfide-bonded.

The protein belongs to the peptidase A1 family. In terms of assembly, homodimer; disulfide-linked. In terms of processing, glycosylated. The nature of the carbohydrate chain varies between cell types. In fibroblasts, the proenzyme contains a high mannose-type oligosaccharide, while the mature enzyme contains a complex-type oligosaccharide. In erythrocyte membranes, both the proenzyme and mature enzyme contain a complex-type oligosaccharide. Two forms are produced by autocatalytic cleavage, form I begins at Ile-54, form II begins at Thr-57. As to expression, expressed abundantly in the stomach, the Clara cells of the lung and activated B-lymphocytes, and at lower levels in lymph nodes, skin and spleen. Not expressed in resting B-lymphocytes.

It is found in the endosome. The enzyme catalyses Similar to cathepsin D, but slightly broader specificity.. In terms of biological role, may have a role in immune function. Probably involved in the processing of antigenic peptides during MHC class II-mediated antigen presentation. May play a role in activation-induced lymphocyte depletion in the thymus, and in neuronal degeneration and glial cell activation in the brain. The protein is Cathepsin E (CTSE) of Homo sapiens (Human).